The sequence spans 402 residues: uncharacterized protein (402 aa).

Residues 1–11 (MTPSNYQRTRW) are Cytoplasmic-facing. The chain crosses the membrane as a helical span at residues 12–34 (LTLIGTIITQFALGSVYTWSLFN). Topologically, residues 35-43 (GALSAKLDA) are periplasmic. The chain crosses the membrane as a helical span at residues 44–66 (PVSQVAFSFGLLSLGLAISSSVA). Residues 67–72 (GKLQER) are Cytoplasmic-facing. A helical transmembrane segment spans residues 73–95 (FGVKRVTMASGILLGLGFFLTAH). At 96–99 (SDNL) the chain is on the periplasmic side. The chain crosses the membrane as a helical span at residues 100-122 (MMLWLSAGVLVGLADGAGYLLTL). Over 123 to 134 (SNCVKWFPERKG) the chain is Cytoplasmic. A helical transmembrane segment spans residues 135–154 (LISAFAIGSYGLGSLGFKFI). Residues 155–168 (DTQLLETVGLEKTF) are Periplasmic-facing. A helical transmembrane segment spans residues 169 to 186 (VIWGAIALLMIVFGATLM). At 187 to 216 (KDAPKQEVKTSNGVVEKDYTLAESMRKPQY) the chain is on the cytoplasmic side. A helical membrane pass occupies residues 217–236 (WMLAVMFLTACMSGLYVIGV). Topologically, residues 237–250 (AKDIAQSLAHLDVV) are periplasmic. Residues 251–273 (SAANAVTVISIANLSGRLVLGIL) traverse the membrane as a helical segment. Topologically, residues 274-279 (SDKIAR) are cytoplasmic. Residues 280–302 (IRVITIGQVISLVGMAALLFAPL) traverse the membrane as a helical segment. The Periplasmic segment spans residues 303–306 (NAVT). Residues 307 to 329 (FFAAIACVAFNFGGTITVFPSLV) form a helical membrane-spanning segment. The Cytoplasmic segment spans residues 330–341 (SEFFGLNNLAKN). The chain crosses the membrane as a helical span at residues 342 to 364 (YGVIYLGFGIGSICGSIIASLFG). The Periplasmic segment spans residues 365 to 367 (GFY). Residues 368 to 387 (VTFYVIFALLILSLALSTTI) traverse the membrane as a helical segment. At 388–402 (RQPEQKMLREAHGSL) the chain is on the cytoplasmic side.

The protein belongs to the major facilitator superfamily. Interacts with BtsS and YpdA.

The protein resides in the cell inner membrane. In terms of biological role, part of a nutrient-sensing regulatory network composed of the two-component regulatory systems BtsS/BtsR and YpdA/YpdB, and their respective target proteins, BtsT and YhjX. This is an uncharacterized protein from Escherichia coli (strain K12).